The chain runs to 315 residues: Calumenin (315 aa).

The first 19 residues, 1–19, serve as a signal peptide directing secretion; sequence MDLRQFLMCLSLCTAFALS. S44 carries the phosphoserine modification. Y47 bears the Phosphotyrosine mark. T65 is subject to Phosphothreonine. EF-hand domains are found at residues 68 to 103, 104 to 139, 151 to 186, 188 to 223, 229 to 264, and 265 to 300; these read ESKE…AQKR, WIYE…YVLD, QMMV…EEYD, MKDI…HDGN, WVKT…SDYD, and HAEA…FVGS. S69 carries the post-translational modification Phosphoserine. Ca(2+)-binding residues include D81, D83, D85, E92, D117, N119, D121, and E128. A glycan (N-linked (GlcNAc...) asparagine) is linked at N131. Residue D164 coordinates Ca(2+). N6-acetyllysine is present on K165. Residues D166, D168, E175, D201, N203, D205, E212, D242, N244, D246, K248, and E253 each contribute to the Ca(2+) site. T254 is modified (phosphothreonine). S261 and S277 each carry phosphoserine. 5 residues coordinate Ca(2+): D278, N280, D282, K284, and E289. A Prevents secretion from ER motif is present at residues 312 to 315; sequence HDEF.

This sequence belongs to the CREC family. As to quaternary structure, interacts with GGCX.

It localises to the endoplasmic reticulum membrane. The protein localises to the golgi apparatus. Its subcellular location is the secreted. The protein resides in the melanosome. It is found in the sarcoplasmic reticulum lumen. Functionally, involved in regulation of vitamin K-dependent carboxylation of multiple N-terminal glutamate residues. Seems to inhibit gamma-carboxylase GGCX. Binds 7 calcium ions with a low affinity. This is Calumenin (CALU) from Pongo abelii (Sumatran orangutan).